A 92-amino-acid polypeptide reads, in one-letter code: MARSVWKGPFVDGYLLKKAEKVREGGRNEVIKMWSRRSTILPQFVGLTFGVYNGSKHVPVSVSEEMVGHKFGEFAPTRTYYGHGADKKAKRK.

This sequence belongs to the universal ribosomal protein uS19 family.

Functionally, protein S19 forms a complex with S13 that binds strongly to the 16S ribosomal RNA. This is Small ribosomal subunit protein uS19 from Brucella ovis (strain ATCC 25840 / 63/290 / NCTC 10512).